A 688-amino-acid polypeptide reads, in one-letter code: Complement C1s subcomponent (688 aa).

The signal sequence occupies residues 1–15 (MWCIVLFSLLAWVYA). Residues 16 to 130 (EPTMYGEILS…TGFAAYYVAT (115 aa)) enclose the CUB 1 domain. Residues glutamate 60, aspartate 68, aspartate 113, aspartate 131, isoleucine 132, and glutamate 134 each coordinate Ca(2+). The cysteines at positions 65 and 83 are disulfide-linked. An EGF-like; calcium-binding domain is found at 131–172 (DINECTDFVDVPCSHFCNNFIGGYFCSCPPEYFLHDDMKNCG). Intrachain disulfides connect cysteine 135–cysteine 147, cysteine 143–cysteine 156, and cysteine 158–cysteine 171. The Ca(2+) site is built by asparagine 149, phenylalanine 150, and glycine 153. (3R)-3-hydroxyasparagine is present on asparagine 149. N-linked (GlcNAc...) asparagine glycosylation occurs at asparagine 174. Cysteine 175 and cysteine 202 are oxidised to a cystine. The region spanning 175–290 (CSGDVFTALI…KGWKLRYHGD (116 aa)) is the CUB 2 domain. Ca(2+) is bound by residues glutamate 226, aspartate 236, aspartate 275, glycine 278, and glutamine 279. Cysteine 234 and cysteine 251 form a disulfide bridge. Sushi domains lie at 292–356 (MPCP…KCQP) and 357–423 (VDCG…KCVP). Cystine bridges form between cysteine 294-cysteine 341, cysteine 321-cysteine 354, cysteine 359-cysteine 403, cysteine 386-cysteine 421, cysteine 425-cysteine 549, cysteine 595-cysteine 618, and cysteine 628-cysteine 659. An N-linked (GlcNAc...) asparagine glycan is attached at asparagine 406. One can recognise a Peptidase S1 domain in the interval 438–680 (IIGGSDADIK…YVDWIMKTMQ (243 aa)). Active-site charge relay system residues include histidine 475 and aspartate 529. Catalysis depends on serine 632, which acts as the Charge relay system.

The protein belongs to the peptidase S1 family. In terms of assembly, core component of the complement C1 complex, a calcium-dependent complex composed of 1 molecule of the C1Q subcomplex, 2 molecules of C1R and 2 molecules of C1S. The C1Q subcomplex is composed 18 subunits: 3 chains of C1QA, C1QB, and C1QC trimerize to form 6 collagen-like triple helices connected to six globular ligand-recognition modules. Cleaved and activated by C1R to generate Complement C1s subcomponent heavy and light chains. Post-translationally, the iron and 2-oxoglutarate dependent 3-hydroxylation of aspartate and asparagine is (R) stereospecific within EGF domains.

It localises to the secreted. Its subcellular location is the cell surface. It carries out the reaction Cleavage of Arg-|-Ala bond in complement component C4 to form C4a and C4b, and Lys(or Arg)-|-Lys bond in complement component C2 to form C2a and C2b: the 'classical' pathway C3 convertase.. Its activity is regulated as follows. Cleaved and activated by C1R. Immunoglobulin-binding promotes autoactivation of C1R, which results in the cleavage of the Arg-Ile bond in the catalytic domain. Inhibited by C1 inhibitor (SERPING1). Component of the complement C1 complex, a multiprotein complex that initiates the classical pathway of the complement system, a cascade of proteins that leads to phagocytosis and breakdown of pathogens and signaling that strengthens the adaptive immune system. C1S is activated following association of the C1 complex with immunoglobulins (IgG or IgM) complexed with antigens to form antigen-antibody complexes on the surface of pathogens. C1S is cleaved and activated by C1R to generate C1s subcomponent heavy and light chains. C1s subcomponent light chain then cleaves and activates C2 and C4, the next components of the classical complement pathway. Functionally, serine protease component of the complement C1 complex, which catalyzes cleavage and activation of C2 and C4, the next components of the classical complement pathway. Also able to cleave C1 inhibitor (SERPING1) in vitro; additional evidence is however required to confirm this result in vivo. Also cleaves IGFBP5 and thereby inhibits the trophic effects of IGF1. This chain is Complement C1s subcomponent, found in Homo sapiens (Human).